The chain runs to 383 residues: Acetylornithine deacetylase (383 aa).

Zn(2+) is bound at residue His80. Asp82 is an active-site residue. Residue Asp112 participates in Zn(2+) binding. Glu144 is a catalytic residue. Zn(2+) is bound by residues Glu145, Glu169, and His355.

Belongs to the peptidase M20A family. ArgE subfamily. In terms of assembly, homodimer. Zn(2+) serves as cofactor. Requires Co(2+) as cofactor. The cofactor is glutathione.

It localises to the cytoplasm. The catalysed reaction is N(2)-acetyl-L-ornithine + H2O = L-ornithine + acetate. The protein operates within amino-acid biosynthesis; L-arginine biosynthesis; L-ornithine from N(2)-acetyl-L-ornithine (linear): step 1/1. Its function is as follows. Catalyzes the hydrolysis of the amide bond of N(2)-acetylated L-amino acids. Cleaves the acetyl group from N-acetyl-L-ornithine to form L-ornithine, an intermediate in L-arginine biosynthesis pathway, and a branchpoint in the synthesis of polyamines. The chain is Acetylornithine deacetylase from Pectobacterium atrosepticum (strain SCRI 1043 / ATCC BAA-672) (Erwinia carotovora subsp. atroseptica).